Here is a 189-residue protein sequence, read N- to C-terminus: Potassium-transporting ATPase KdpC subunit (189 aa).

A helical membrane pass occupies residues 10 to 30 (LTLVFCVFFSVCYILVLWIFA).

Belongs to the KdpC family. In terms of assembly, the system is composed of three essential subunits: KdpA, KdpB and KdpC.

Its subcellular location is the cell inner membrane. Part of the high-affinity ATP-driven potassium transport (or Kdp) system, which catalyzes the hydrolysis of ATP coupled with the electrogenic transport of potassium into the cytoplasm. This subunit acts as a catalytic chaperone that increases the ATP-binding affinity of the ATP-hydrolyzing subunit KdpB by the formation of a transient KdpB/KdpC/ATP ternary complex. This is Potassium-transporting ATPase KdpC subunit from Phocaeicola vulgatus (strain ATCC 8482 / DSM 1447 / JCM 5826 / CCUG 4940 / NBRC 14291 / NCTC 11154) (Bacteroides vulgatus).